We begin with the raw amino-acid sequence, 66 residues long: Beta-defensin 107A (66 aa).

Residues 1 to 22 (MKIFFFIFAALFLLAQIFQART) form the signal peptide. 2 cysteine pairs are disulfide-bonded: cysteine 37–cysteine 51 and cysteine 41–cysteine 60.

Belongs to the beta-defensin family.

It is found in the secreted. Its function is as follows. Has antibacterial activity. This is Beta-defensin 107A (DEFB107A) from Gorilla gorilla gorilla (Western lowland gorilla).